Consider the following 1045-residue polypeptide: Protein transport protein Sec16B (1045 aa).

Residues 1 to 13 show a composition bias toward pro residues; it reads MEPWVPQWPPPSR. The segment at 1–78 is disordered; that stretch reads MEPWVPQWPP…PQHVPRLGAW (78 aa). Over residues 22-33 the composition is skewed to basic and acidic residues; the sequence is DSERGLQRDGYH. Residues 50 to 60 show a composition bias toward polar residues; the sequence is QDVQGSPQPQQ. Phosphoserine occurs at positions 55 and 137. Positions 149–168 are enriched in basic and acidic residues; the sequence is RHLSEHRPENQSRTFRRDSE. Disordered stretches follow at residues 149 to 193, 707 to 733, 748 to 789, and 813 to 1045; these read RHLS…QERP, QQKA…TTES, APGC…YSVP, and QTHS…TQPC. Position 186 is a phosphoserine (Ser186). Residues 267–711 form a central conserved domain (CCD); required for localization to endoplasmic reticulum exit sites region; sequence APKKFYIPHV…RHQELQQKAA (445 aa). Residues 773–784 are compositionally biased toward low complexity; it reads GPAAGPAGAPVP. Residues Ser852, Ser858, Ser866, and Ser867 each carry the phosphoserine modification. Residues 916-926 show a composition bias toward acidic residues; sequence EDSSDSPDSEQ. Residues 942–953 show a composition bias toward pro residues; it reads SPPPLLESPPLP. The segment covering 957 to 966 has biased composition (gly residues); the sequence is AFGGGTGRGE. A compositionally biased stretch (polar residues) spans 989–998; that stretch reads ESASSELYSN.

It belongs to the SEC16 family. SEC16A and SEC16B are each present in multiple copies in a heteromeric complex. Interacts with TFG. Interacts with SEC13. Liver.

The protein resides in the endoplasmic reticulum membrane. It is found in the golgi apparatus membrane. Plays a role in the organization of the endoplasmic reticulum exit sites (ERES), also known as transitional endoplasmic reticulum (tER). Required for secretory cargo traffic from the endoplasmic reticulum to the Golgi apparatus. Involved in peroxisome biogenesis. Regulates the transport of peroxisomal biogenesis factors PEX3 and PEX16 from the ER to peroxisomes. The polypeptide is Protein transport protein Sec16B (SEC16B) (Oryctolagus cuniculus (Rabbit)).